The sequence spans 246 residues: Pyridoxine 5'-phosphate synthase (246 aa).

Asn-6 serves as a coordination point for 3-amino-2-oxopropyl phosphate. 8–9 (DH) is a 1-deoxy-D-xylulose 5-phosphate binding site. A 3-amino-2-oxopropyl phosphate-binding site is contributed by Arg-17. His-49 serves as the catalytic Proton acceptor. The 1-deoxy-D-xylulose 5-phosphate site is built by Arg-51 and His-56. Residue Glu-76 is the Proton acceptor of the active site. Thr-106 contacts 1-deoxy-D-xylulose 5-phosphate. The active-site Proton donor is His-196. 3-amino-2-oxopropyl phosphate is bound by residues Gly-197 and 219-220 (GH).

Belongs to the PNP synthase family. As to quaternary structure, homooctamer; tetramer of dimers.

The protein localises to the cytoplasm. It carries out the reaction 3-amino-2-oxopropyl phosphate + 1-deoxy-D-xylulose 5-phosphate = pyridoxine 5'-phosphate + phosphate + 2 H2O + H(+). It functions in the pathway cofactor biosynthesis; pyridoxine 5'-phosphate biosynthesis; pyridoxine 5'-phosphate from D-erythrose 4-phosphate: step 5/5. Catalyzes the complicated ring closure reaction between the two acyclic compounds 1-deoxy-D-xylulose-5-phosphate (DXP) and 3-amino-2-oxopropyl phosphate (1-amino-acetone-3-phosphate or AAP) to form pyridoxine 5'-phosphate (PNP) and inorganic phosphate. This Akkermansia muciniphila (strain ATCC BAA-835 / DSM 22959 / JCM 33894 / BCRC 81048 / CCUG 64013 / CIP 107961 / Muc) protein is Pyridoxine 5'-phosphate synthase.